The following is a 488-amino-acid chain: Microtubule-destabilizing protein 60 (488 aa).

Residues 25-56 (AQEVSRFSENSNPNFVSHSTPLEKSSKSSAQK) are compositionally biased toward polar residues. Disordered stretches follow at residues 25-71 (AQEV…VFSP), 262-304 (HASV…TKKQ), and 436-457 (DRPF…PKFN). The segment covering 264–280 (SVSSSWDNSVSSLNSNG) has biased composition (low complexity).

It belongs to the TPX2 family.

Its subcellular location is the cytoplasm. It is found in the cytoskeleton. In terms of biological role, binds directly to microtubules. Microtubule-destabilizing protein involved in the PIF3-dependent positive regulation of hypocotyl cell elongation via the modulation of cortical microtubules dynamic in response to light and ethylene signaling. Promotes submergence-induced and ethylene-dependent underwater hypocotyl elongation. The sequence is that of Microtubule-destabilizing protein 60 from Arabidopsis thaliana (Mouse-ear cress).